A 261-amino-acid polypeptide reads, in one-letter code: Succinate dehydrogenase iron-sulfur subunit (261 aa).

A 2Fe-2S ferredoxin-type domain is found at arginine 28–methionine 119. Positions 80, 85, and 100 each coordinate [2Fe-2S] cluster. The 31-residue stretch at aspartate 161–tyrosine 191 folds into the 4Fe-4S ferredoxin-type domain. The [4Fe-4S] cluster site is built by cysteine 171, cysteine 174, and cysteine 177. A [3Fe-4S] cluster-binding site is contributed by cysteine 181. Tryptophan 186 contributes to the a ubiquinone binding site. [3Fe-4S] cluster is bound by residues cysteine 228 and cysteine 234. [4Fe-4S] cluster is bound at residue cysteine 238.

The protein belongs to the succinate dehydrogenase/fumarate reductase iron-sulfur protein family. Part of an enzyme complex containing four subunits: a flavoprotein, an iron-sulfur, cytochrome b-556, and a hydrophobic anchor protein. [2Fe-2S] cluster serves as cofactor. The cofactor is [3Fe-4S] cluster. [4Fe-4S] cluster is required as a cofactor.

The catalysed reaction is a quinone + succinate = fumarate + a quinol. Its pathway is carbohydrate metabolism; tricarboxylic acid cycle; fumarate from succinate (bacterial route): step 1/1. The sequence is that of Succinate dehydrogenase iron-sulfur subunit (sdhB) from Rickettsia prowazekii (strain Madrid E).